The sequence spans 376 residues: Chaperone protein DnaJ (376 aa).

The J domain maps to 5–72; it reads DFYEVLGVPK…QKRAAYDQYG (68 aa). The CR-type zinc-finger motif lies at 136 to 214; the sequence is GKEAQIRIPS…CHGQGRVKKQ (79 aa). Zn(2+) is bound by residues Cys149, Cys152, Cys166, Cys169, Cys188, Cys191, Cys202, and Cys205. CXXCXGXG motif repeat units lie at residues 149–156, 166–173, 188–195, and 202–209; these read CETCHGSG, CGTCQGSG, CPHCRGTG, and CTACHGQG. 2 disordered regions span residues 227–246 and 354–376; these read DGMR…GGPP and KKGG…SFFS. The segment covering 237–246 has biased composition (gly residues); the sequence is GEPGTNGGPP. A compositionally biased stretch (basic and acidic residues) spans 367-376; that stretch reads WTDRLKSFFS.

This sequence belongs to the DnaJ family. As to quaternary structure, homodimer. The cofactor is Zn(2+).

Its subcellular location is the cytoplasm. In terms of biological role, participates actively in the response to hyperosmotic and heat shock by preventing the aggregation of stress-denatured proteins and by disaggregating proteins, also in an autonomous, DnaK-independent fashion. Unfolded proteins bind initially to DnaJ; upon interaction with the DnaJ-bound protein, DnaK hydrolyzes its bound ATP, resulting in the formation of a stable complex. GrpE releases ADP from DnaK; ATP binding to DnaK triggers the release of the substrate protein, thus completing the reaction cycle. Several rounds of ATP-dependent interactions between DnaJ, DnaK and GrpE are required for fully efficient folding. Also involved, together with DnaK and GrpE, in the DNA replication of plasmids through activation of initiation proteins. This Acidovorax ebreus (strain TPSY) (Diaphorobacter sp. (strain TPSY)) protein is Chaperone protein DnaJ.